A 655-amino-acid chain; its full sequence is Methyl-accepting chemotaxis protein McpC (655 aa).

The Cytoplasmic portion of the chain corresponds to 1–8 (MFKKLHMK). A helical membrane pass occupies residues 9–29 (IAVFVSIMLIITVVLLMLSSY). Over 30-276 (LTLKPMITED…LMWISDKMNR (247 aa)) the chain is Extracellular. The region spanning 148-225 (WTEPYKDVVT…SNQGKNISKD (78 aa)) is the Cache domain. A helical membrane pass occupies residues 277-297 (ANLWISLIALIITIILSYFLA). An HAMP domain is found at 298–350 (KTITGPIQQLIVKTKAVSAGDLTVRAESKSKDEVGILTRDFNLMVENMKEMVE). Topologically, residues 298-655 (KTITGPIQQL…LMNTIAKFTL (358 aa)) are cytoplasmic. The Methyl-accepting transducer domain occupies 369 to 619 (VAAETNETSG…ESAAAAEEVN (251 aa)).

The protein belongs to the methyl-accepting chemotaxis (MCP) protein family. In terms of assembly, interacts with FloT. Some glutamine residues are deamidated to glutamate by CheD and subsequently methylated.

The protein resides in the cell membrane. It is found in the membrane raft. Functionally, chemotactic-signal transducers respond to changes in the concentration of attractants and repellents in the environment, transduce a signal from the outside to the inside of the cell, and facilitate sensory adaptation through the variation of the level of methylation. All amino acids serve as attractants in B.subtilis, they appear to cause an increase in the turnover methyl groups, leading to methylation of an unidentified acceptor, while repellents have been shown to cause a decrease in methyl group turnover. The methyl groups are added by a methyltransferase and removed by a methylesterase. McpC is required for taxis to cysteine, proline, threonine, glycine, serine, lysine, valine and arginine and for aspartate, glutamine, histidine and glutamate. Primarily mediates response to positive stimulus of PTS carbohydrates. Greatly influences the duration or magnitude of the response to negative PTS carbohydrate stimulus. The polypeptide is Methyl-accepting chemotaxis protein McpC (mcpC) (Bacillus subtilis (strain 168)).